The primary structure comprises 988 residues: DNA-binding protein SMUBP-2 (988 aa).

The residue at position 2 (Ala2) is an N-acetylalanine. ATP is bound by residues Gly213–Thr220, Gln402, Tyr441, and Glu570. The tract at residues Thr637–Arg783 is SS DNA-binding. 3 disordered regions span residues Thr651–Asp722, Leu765–Ser820, and Arg835–Ser872. Positions Ser702–Thr718 are enriched in polar residues. The 64-residue stretch at Thr721–Ser784 folds into the R3H domain. Basic and acidic residues predominate over residues Leu765 to Ala775. Residues Ser797 and Ser800 each carry the phosphoserine modification. The span at Ala802–Pro817 shows a compositional bias: low complexity. Residues Arg835 to Gln844 are compositionally biased toward polar residues. The short motif at Lys857–Lys861 is the Nuclear localization signal element. The segment at Val884–Ala933 adopts an AN1-type zinc-finger fold. Zn(2+) is bound by residues Cys890, Cys895, Cys906, Cys909, Cys914, His917, His923, and Cys925. The interval Leu943–Thr988 is disordered. A compositionally biased stretch (basic and acidic residues) spans Thr949–Gly971. The stretch at Ala957–Arg986 forms a coiled coil.

The protein belongs to the DNA2/NAM7 helicase family. As to quaternary structure, homooligomer. Interacts with RUVBL1. Interacts with RUVBL2. Interacts with GTF3C1. Interacts with ABT1. Interacts with ribosomes. In terms of tissue distribution, expressed in liver, skin, muscle, heart, brain, spleen and kidney.

The protein resides in the nucleus. It is found in the cytoplasm. Its subcellular location is the cell projection. The protein localises to the axon. The enzyme catalyses ATP + H2O = ADP + phosphate + H(+). Its function is as follows. 5' to 3' helicase that unwinds RNA and DNA duplexes in an ATP-dependent reaction. Specific to 5'-phosphorylated single-stranded guanine-rich sequences. May play a role in RNA metabolism, ribosome biogenesis or initiation of translation. May play a role in regulation of transcription. Interacts with tRNA-Tyr. In Rattus norvegicus (Rat), this protein is DNA-binding protein SMUBP-2 (Ighmbp2).